Reading from the N-terminus, the 586-residue chain is YTH domain-containing family protein 2 (586 aa).

Disordered regions lie at residues Leu98–Gln128, Ser141–Pro181, and Gln301–Ser464. 3 stretches are compositionally biased toward polar residues: residues Ala107–Gln128, Thr169–Pro181, and Ser352–Gln368. Residues Cys398–Arg418 show a composition bias toward basic residues. A compositionally biased stretch (polar residues) spans Thr421 to Arg436. The 142-residue stretch at Ser435–Met576 folds into the YTH domain. Positions Gly441–Pro458 are enriched in basic and acidic residues.

The protein belongs to the YTHDF family. YTHDF1 subfamily.

Its function is as follows. Specifically recognizes and binds N6-methyladenosine (m6A)-containing mRNAs, and regulates their stability. M6A is a modification present at internal sites of mRNAs and some non-coding RNAs and plays a role in mRNA stability and processing. Plays a role in pathogenicity towards plant host. The protein is YTH domain-containing family protein 2 of Pyricularia oryzae (strain 70-15 / ATCC MYA-4617 / FGSC 8958) (Rice blast fungus).